Here is a 46-residue protein sequence, read N- to C-terminus: Protein PsbN (46 aa).

A helical membrane pass occupies residues 7–27 (ALSVAIGVLAVLLGMTGFGVY).

It belongs to the PsbN family.

It localises to the cellular thylakoid membrane. Functionally, may play a role in photosystem I and II biogenesis. This Parasynechococcus marenigrum (strain WH8102) protein is Protein PsbN.